The primary structure comprises 183 residues: Ras-like protein (183 aa).

10-17 (GAGGVGKS) contributes to the GTP binding site. The short motif at 32 to 40 (YDPTIEDSY) is the Effector region element. GTP contacts are provided by residues 57 to 61 (DTAGQ) and 116 to 119 (NKCD).

This sequence belongs to the small GTPase superfamily. Ras family.

It localises to the cell membrane. The enzyme catalyses GTP + H2O = GDP + phosphate + H(+). With respect to regulation, alternates between an inactive form bound to GDP and an active form bound to GTP. Activated by a guanine nucleotide-exchange factor (GEF) and inactivated by a GTPase-activating protein (GAP). Ras proteins bind GDP/GTP and possess intrinsic GTPase activity. This Carassius auratus (Goldfish) protein is Ras-like protein.